The chain runs to 220 residues: 7-cyano-7-deazaguanine synthase (220 aa).

Residue 11–21 (VSGGMDSVTLM) participates in ATP binding. 4 residues coordinate Zn(2+): Cys-186, Cys-194, Cys-197, and Cys-200.

Belongs to the QueC family. It depends on Zn(2+) as a cofactor.

The enzyme catalyses 7-carboxy-7-deazaguanine + NH4(+) + ATP = 7-cyano-7-deazaguanine + ADP + phosphate + H2O + H(+). Its pathway is purine metabolism; 7-cyano-7-deazaguanine biosynthesis. Catalyzes the ATP-dependent conversion of 7-carboxy-7-deazaguanine (CDG) to 7-cyano-7-deazaguanine (preQ(0)). The sequence is that of 7-cyano-7-deazaguanine synthase from Porphyromonas gingivalis (strain ATCC 33277 / DSM 20709 / CIP 103683 / JCM 12257 / NCTC 11834 / 2561).